The chain runs to 383 residues: Chaperone protein DnaJ (383 aa).

The 66-residue stretch at D5–G70 folds into the J domain. Residues G140–E219 form a CR-type zinc finger. Zn(2+) is bound by residues C153, C156, C171, C174, C193, C196, C207, and C210. 4 CXXCXGXG motif repeats span residues C153–G160, C171–G178, C193–G200, and C207–G214.

The protein belongs to the DnaJ family. In terms of assembly, homodimer. It depends on Zn(2+) as a cofactor.

The protein resides in the cytoplasm. Functionally, participates actively in the response to hyperosmotic and heat shock by preventing the aggregation of stress-denatured proteins and by disaggregating proteins, also in an autonomous, DnaK-independent fashion. Unfolded proteins bind initially to DnaJ; upon interaction with the DnaJ-bound protein, DnaK hydrolyzes its bound ATP, resulting in the formation of a stable complex. GrpE releases ADP from DnaK; ATP binding to DnaK triggers the release of the substrate protein, thus completing the reaction cycle. Several rounds of ATP-dependent interactions between DnaJ, DnaK and GrpE are required for fully efficient folding. Also involved, together with DnaK and GrpE, in the DNA replication of plasmids through activation of initiation proteins. This is Chaperone protein DnaJ from Acidiphilium cryptum (strain JF-5).